The following is a 113-amino-acid chain: Protein FAM27E3 (113 aa).

Residues M1 to L113 form a disordered region. The segment covering Q77–R99 has biased composition (basic and acidic residues). Residues H100–L113 show a composition bias toward basic residues.

Belongs to the FAM27 family.

In Homo sapiens (Human), this protein is Protein FAM27E3 (FAM27E3).